The primary structure comprises 344 residues: S-adenosylmethionine:tRNA ribosyltransferase-isomerase (344 aa).

This sequence belongs to the QueA family. Monomer.

It localises to the cytoplasm. The catalysed reaction is 7-aminomethyl-7-carbaguanosine(34) in tRNA + S-adenosyl-L-methionine = epoxyqueuosine(34) in tRNA + adenine + L-methionine + 2 H(+). Its pathway is tRNA modification; tRNA-queuosine biosynthesis. Transfers and isomerizes the ribose moiety from AdoMet to the 7-aminomethyl group of 7-deazaguanine (preQ1-tRNA) to give epoxyqueuosine (oQ-tRNA). This Acinetobacter baylyi (strain ATCC 33305 / BD413 / ADP1) protein is S-adenosylmethionine:tRNA ribosyltransferase-isomerase.